Reading from the N-terminus, the 263-residue chain is Proteasome subunit alpha (263 aa).

A disordered region spans residues 229–263 (AALLQDTPPDDADADADAGKKPANDGNLPPNDDKS).

It belongs to the peptidase T1A family. As to quaternary structure, the 20S proteasome core is composed of 14 alpha and 14 beta subunits that assemble into four stacked heptameric rings, resulting in a barrel-shaped structure. The two inner rings, each composed of seven catalytic beta subunits, are sandwiched by two outer rings, each composed of seven alpha subunits. The catalytic chamber with the active sites is on the inside of the barrel. Has a gated structure, the ends of the cylinder being occluded by the N-termini of the alpha-subunits. Is capped by the proteasome-associated ATPase, ARC.

It localises to the cytoplasm. It participates in protein degradation; proteasomal Pup-dependent pathway. The formation of the proteasomal ATPase ARC-20S proteasome complex, likely via the docking of the C-termini of ARC into the intersubunit pockets in the alpha-rings, may trigger opening of the gate for substrate entry. Interconversion between the open-gate and close-gate conformations leads to a dynamic regulation of the 20S proteasome proteolysis activity. In terms of biological role, component of the proteasome core, a large protease complex with broad specificity involved in protein degradation. In Actinosynnema mirum (strain ATCC 29888 / DSM 43827 / JCM 3225 / NBRC 14064 / NCIMB 13271 / NRRL B-12336 / IMRU 3971 / 101), this protein is Proteasome subunit alpha.